Consider the following 260-residue polypeptide: Taurine import ATP-binding protein TauB (260 aa).

Positions 6 to 235 (AQQVSVVYAS…RYAHGEPMRS (230 aa)) constitute an ABC transporter domain. 40–47 (GASGCGKS) contacts ATP.

The protein belongs to the ABC transporter superfamily. Taurine importer (TC 3.A.1.17.1) family. As to quaternary structure, the complex is composed of two ATP-binding proteins (TauB), two transmembrane proteins (TauC) and a solute-binding protein (TauA).

Its subcellular location is the cell inner membrane. It carries out the reaction taurine(out) + ATP + H2O = taurine(in) + ADP + phosphate + H(+). Functionally, part of the ABC transporter complex TauABC involved in taurine import. Responsible for energy coupling to the transport system. This is Taurine import ATP-binding protein TauB from Burkholderia pseudomallei (strain 1710b).